Here is a 185-residue protein sequence, read N- to C-terminus: Elongation factor P (185 aa).

Belongs to the elongation factor P family.

It localises to the cytoplasm. It participates in protein biosynthesis; polypeptide chain elongation. Functionally, involved in peptide bond synthesis. Stimulates efficient translation and peptide-bond synthesis on native or reconstituted 70S ribosomes in vitro. Probably functions indirectly by altering the affinity of the ribosome for aminoacyl-tRNA, thus increasing their reactivity as acceptors for peptidyl transferase. In Listeria innocua serovar 6a (strain ATCC BAA-680 / CLIP 11262), this protein is Elongation factor P.